A 156-amino-acid chain; its full sequence is 6,7-dimethyl-8-ribityllumazine synthase (156 aa).

Residues F22, 57-59 (AYE), and 81-83 (TVI) contribute to the 5-amino-6-(D-ribitylamino)uracil site. 86 to 87 (GT) provides a ligand contact to (2S)-2-hydroxy-3-oxobutyl phosphate. Residue H89 is the Proton donor of the active site. Residue F114 participates in 5-amino-6-(D-ribitylamino)uracil binding. Residue R128 coordinates (2S)-2-hydroxy-3-oxobutyl phosphate.

Belongs to the DMRL synthase family. In terms of assembly, forms an icosahedral capsid composed of 60 subunits, arranged as a dodecamer of pentamers.

It catalyses the reaction (2S)-2-hydroxy-3-oxobutyl phosphate + 5-amino-6-(D-ribitylamino)uracil = 6,7-dimethyl-8-(1-D-ribityl)lumazine + phosphate + 2 H2O + H(+). Its pathway is cofactor biosynthesis; riboflavin biosynthesis; riboflavin from 2-hydroxy-3-oxobutyl phosphate and 5-amino-6-(D-ribitylamino)uracil: step 1/2. In terms of biological role, catalyzes the formation of 6,7-dimethyl-8-ribityllumazine by condensation of 5-amino-6-(D-ribitylamino)uracil with 3,4-dihydroxy-2-butanone 4-phosphate. This is the penultimate step in the biosynthesis of riboflavin. The polypeptide is 6,7-dimethyl-8-ribityllumazine synthase (Erwinia tasmaniensis (strain DSM 17950 / CFBP 7177 / CIP 109463 / NCPPB 4357 / Et1/99)).